The following is a 1070-amino-acid chain: DNA-directed RNA polymerase subunit beta (1070 aa).

Belongs to the RNA polymerase beta chain family. In terms of assembly, in plastids the minimal PEP RNA polymerase catalytic core is composed of four subunits: alpha, beta, beta', and beta''. When a (nuclear-encoded) sigma factor is associated with the core the holoenzyme is formed, which can initiate transcription.

The protein localises to the plastid. It is found in the chloroplast. The catalysed reaction is RNA(n) + a ribonucleoside 5'-triphosphate = RNA(n+1) + diphosphate. In terms of biological role, DNA-dependent RNA polymerase catalyzes the transcription of DNA into RNA using the four ribonucleoside triphosphates as substrates. In Solanum bulbocastanum (Wild potato), this protein is DNA-directed RNA polymerase subunit beta.